The sequence spans 158 residues: MHEGVQVSSKLEELQALLAPVVVALGYECWGIEFSAQGRHSMLRVYIDKEGGVLVDDCAIVSRQISGVLDVEDPISVEYTLEVSSPGMERPLFTIDQFAKFAGEQVKIKLRSPFEGRRNFQGLLRGVEEQDVVVQVEDHEFLLPIDMIDKANIIPSFD.

This sequence belongs to the RimP family.

Its subcellular location is the cytoplasm. Its function is as follows. Required for maturation of 30S ribosomal subunits. The chain is Ribosome maturation factor RimP from Pseudomonas fluorescens (strain SBW25).